The sequence spans 429 residues: Glutamate-1-semialdehyde 2,1-aminomutase 2 (429 aa).

Position 267 is an N6-(pyridoxal phosphate)lysine (K267).

Belongs to the class-III pyridoxal-phosphate-dependent aminotransferase family. HemL subfamily. In terms of assembly, homodimer. Pyridoxal 5'-phosphate is required as a cofactor.

The protein resides in the cytoplasm. It catalyses the reaction (S)-4-amino-5-oxopentanoate = 5-aminolevulinate. Its pathway is porphyrin-containing compound metabolism; protoporphyrin-IX biosynthesis; 5-aminolevulinate from L-glutamyl-tRNA(Glu): step 2/2. This is Glutamate-1-semialdehyde 2,1-aminomutase 2 from Brevibacillus brevis (strain 47 / JCM 6285 / NBRC 100599).